Consider the following 110-residue polypeptide: Large ribosomal subunit protein uL22 (110 aa).

It belongs to the universal ribosomal protein uL22 family. In terms of assembly, part of the 50S ribosomal subunit.

In terms of biological role, this protein binds specifically to 23S rRNA; its binding is stimulated by other ribosomal proteins, e.g. L4, L17, and L20. It is important during the early stages of 50S assembly. It makes multiple contacts with different domains of the 23S rRNA in the assembled 50S subunit and ribosome. Its function is as follows. The globular domain of the protein is located near the polypeptide exit tunnel on the outside of the subunit, while an extended beta-hairpin is found that lines the wall of the exit tunnel in the center of the 70S ribosome. In Chromohalobacter salexigens (strain ATCC BAA-138 / DSM 3043 / CIP 106854 / NCIMB 13768 / 1H11), this protein is Large ribosomal subunit protein uL22.